Here is a 685-residue protein sequence, read N- to C-terminus: Amino acid transporter heavy chain SLC3A1 (685 aa).

Over residues 1 to 11 (MAEDKSKRDSI) the composition is skewed to basic and acidic residues. The segment at 1-56 (MAEDKSKRDSIEMSMKGCQTNNGFVHNEDILEQTPDPGSSTDNLKHSTRGILGSQE) is disordered. Over 1-87 (MAEDKSKRDS…GQARYRIPRE (87 aa)) the chain is Cytoplasmic. Ser10 bears the Phosphoserine mark. A helical; Signal-anchor for type II membrane protein membrane pass occupies residues 88–108 (ILFWLTVASVLVLIAATIAII). Over 109–685 (ALSPKCLDWW…SVLNILYTSC (577 aa)) the chain is Extracellular. Asn214 is a binding site for Ca(2+). N-linked (GlcNAc...) asparagine glycans are attached at residues Asn214 and Asn261. A disulfide bridge connects residues Cys242 and Cys273. Asp284, Phe318, Leu319, and Glu321 together coordinate Ca(2+). N-linked (GlcNAc...) asparagine glycosylation is found at Asn332, Asn495, Asn513, and Asn575. 2 disulfide bridges follow: Cys571/Cys666 and Cys673/Cys685.

Disulfide-linked heterodimer composed of the catalytic light subunit SLC7A9 and the heavy subunit SLC3A1. The heterodimer is the minimal functional unit. Assembles in non-covalently linked heterotetramers (dimers of heterodimers) and higher order oligomers; the oligomerization is mediated by SLC3A1 likely to prevent degradation in the endoplasmic reticulum and facilitate heteromer trafficking to the plasma membrane. Disulfide-linked heterodimer composed of the catalytic light subunit SLC7A13 and the heavy subunit SLC3A1. Expressed in the brush border membrane in the kidney (at protein level). Predominantly expressed in the kidney, small intestine and pancreas. Weakly expressed in liver.

The protein resides in the cell membrane. It is found in the apical cell membrane. Its function is as follows. Acts as a chaperone that facilitates biogenesis and trafficking of functional transporter heteromers to the plasma membrane. Associates with SLC7A9 to form a functional transporter complex that mediates the electrogenic exchange between cationic amino acids and neutral amino acids, with a stoichiometry of 1:1. SLC7A9-SLC3A1 transporter has system b(0,+)-like activity with high affinity for extracellular cationic amino acids and L-cystine and lower affinity for intracellular neutral amino acids. Substrate exchange is driven by high concentration of intracellular neutral amino acids and the intracellular reduction of L-cystine to L-cysteine. SLC7A9-SLC3A1 acts as a major transporter for reabsorption of L-cystine and dibasic amino acids across the brush border membrane in early proximal tubules. Associates with SLC7A13 to form a functional complex that transports anionic and neutral amino acids via exchange or facilitated diffusion. SLC7A13-SLC3A1 may act as a major transporter for L-cystine in late proximal tubules, ensuring its reabsorption from the luminal fluid in exchange for cytosolic L-glutamate or L-aspartate. The protein is Amino acid transporter heavy chain SLC3A1 of Homo sapiens (Human).